The chain runs to 277 residues: Urease accessory protein UreD (277 aa).

The protein belongs to the UreD family. As to quaternary structure, ureD, UreF and UreG form a complex that acts as a GTP-hydrolysis-dependent molecular chaperone, activating the urease apoprotein by helping to assemble the nickel containing metallocenter of UreC. The UreE protein probably delivers the nickel.

Its subcellular location is the cytoplasm. Required for maturation of urease via the functional incorporation of the urease nickel metallocenter. The chain is Urease accessory protein UreD from Pseudomonas putida (strain GB-1).